The following is a 221-amino-acid chain: MDDATNKKRKVFVSTILTFWNTDRRDFPWRHTRDPYVILITEILLRRTTAGHVKKIYDKFFVKYKCFEDILKTPKSEIAKDIKEIGLSNQRAEQLKELARVVINDYGGRVPRNRKAILDLPGVGKYTCAAVMCLAFGKKAAMVDANFVRVINRYFGGSYENLNYNHKALWELAETLVPGGKCRDFNLGLMDFSAIICAPRKPKCEKCGMSKLCSYYEKCST.

The HhH domain occupies 105 to 133 (DYGGRVPRNRKAILDLPGVGKYTCAAVMC). Positions 197, 204, 207, and 213 each coordinate [4Fe-4S] cluster.

It belongs to the Nth/MutY family. [4Fe-4S] cluster serves as cofactor.

The enzyme catalyses Hydrolyzes mismatched double-stranded DNA and polynucleotides, releasing free thymine.. DNA glycosylase that excises thymine from T/G mismatches and uracil from U/G mismatches. Acts as a repair enzyme able to counteract the mutagenic effect of spontaneous hydrolytic deamination of DNA 5-methylcytosine (5-meC) residues that leads to the formation of T/G mismatches. May also repair U/G mismatches arising from hydrolytic deamination of DNA cytosine residues. G/G, A/G, T/C and U/C are minor substrates. In Methanothermobacter thermautotrophicus (Methanobacterium thermoformicicum), this protein is Thymine/uracil-DNA glycosylase.